A 301-amino-acid chain; its full sequence is 5'-3' exonuclease (301 aa).

Residues 182–264 enclose the 5'-3' exonuclease domain; it reads GYADLALLRG…RVAADVPLPD (83 aa).

Functionally, 5'-3' exonuclease acting preferentially on double-stranded DNA. This chain is 5'-3' exonuclease, found in Streptomyces coelicolor (strain ATCC BAA-471 / A3(2) / M145).